The sequence spans 88 residues: uncharacterized protein (88 aa).

This is an uncharacterized protein from Orgyia pseudotsugata (Douglas-fir tussock moth).